Consider the following 208-residue polypeptide: 3-isopropylmalate dehydratase small subunit 2 (208 aa).

Positions 163–208 (EGERLDNASTSAGHGHAGTPLGDDPAKEDGPRPEQASGHQKEEHHA) are disordered.

This sequence belongs to the LeuD family. LeuD type 2 subfamily. Heterodimer of LeuC and LeuD.

The catalysed reaction is (2R,3S)-3-isopropylmalate = (2S)-2-isopropylmalate. Its pathway is amino-acid biosynthesis; L-leucine biosynthesis; L-leucine from 3-methyl-2-oxobutanoate: step 2/4. Catalyzes the isomerization between 2-isopropylmalate and 3-isopropylmalate, via the formation of 2-isopropylmaleate. This chain is 3-isopropylmalate dehydratase small subunit 2 (leuD2), found in Deinococcus radiodurans (strain ATCC 13939 / DSM 20539 / JCM 16871 / CCUG 27074 / LMG 4051 / NBRC 15346 / NCIMB 9279 / VKM B-1422 / R1).